Reading from the N-terminus, the 623-residue chain is MGKVVGIDLGTTNSVVAVMEGGKPTVITNSEGQRTTPSVVAYTKKGDLLVGQIAKRQAVINPENTFYSVKRFIGRKTSEVTEALRQVPYKVLQTEDIIKLDCPALGKQFASEEISAQVLRKLADDATKYLGETVTQAVITVPAYFNDSQRQATKDAGKIAGLEVLRIINEPTAASLSYGLDKKDNETILVFDLGGGTFDVSILEVGDGVFEVLATSGDTRLGGDDFDEKIVQWLVNEFKNDEGIDLTQDNQALQRLTEAAEKAKVELSTLTQSSINLPFISVTPEGPKHLEKDLTRAKFEELCSDLIDRCKTPIQNALKDAELSPSSIDQNVLVGGSTRIPAVQELVEQLLGKKPNQSVNPDEVVAVGAAVQAGVLGGEVKDILLLDVTPLSLGVETLGGITTKITPRNTIIPTKKSETFSTAVDNQPNVEIHVLQGERELAKDNKSLGTFRLDGIAPAARGVPQIEVTFDIDANGILSVTAKDKATNKQQSITISGASNLAKDEVERMVEEAEQNAASDKEKSEQIDVKNKADSLCYQTKKQLEELSSKLEAADKEKVEEVLTKLELAVQNDDLEGMKTLSEELQKNMMEVGQKVYTPDAGAEGGAAPSQDDAIETDFSTEK.

The interval T598 to K623 is disordered.

It belongs to the heat shock protein 70 family.

It is found in the plastid. Its subcellular location is the chloroplast. Acts as a chaperone. The protein is Chaperone protein dnaK of Emiliania huxleyi (Coccolithophore).